The primary structure comprises 465 residues: ATP synthase subunit beta (465 aa).

155–162 contributes to the ATP binding site; it reads GGAGVGKT.

This sequence belongs to the ATPase alpha/beta chains family. In terms of assembly, F-type ATPases have 2 components, CF(1) - the catalytic core - and CF(0) - the membrane proton channel. CF(1) has five subunits: alpha(3), beta(3), gamma(1), delta(1), epsilon(1). CF(0) has three main subunits: a(1), b(2) and c(9-12). The alpha and beta chains form an alternating ring which encloses part of the gamma chain. CF(1) is attached to CF(0) by a central stalk formed by the gamma and epsilon chains, while a peripheral stalk is formed by the delta and b chains.

It is found in the cell membrane. It carries out the reaction ATP + H2O + 4 H(+)(in) = ADP + phosphate + 5 H(+)(out). In terms of biological role, produces ATP from ADP in the presence of a proton gradient across the membrane. The catalytic sites are hosted primarily by the beta subunits. This is ATP synthase subunit beta from Buchnera aphidicola subsp. Acyrthosiphon pisum (strain 5A).